Reading from the N-terminus, the 318-residue chain is Retinol dehydrogenase 5 (318 aa).

Residues M1–S23 form a helical membrane-spanning segment. The Lumenal portion of the chain corresponds to L24 to K288. Position 32–56 (F32–L56) interacts with NADP(+). S163 is a substrate binding site. Y175 acts as the Proton acceptor in catalysis. Residues L289 to I309 form a helical membrane-spanning segment. Residues L310 to S318 are Cytoplasmic-facing.

This sequence belongs to the short-chain dehydrogenases/reductases (SDR) family. In terms of assembly, homodimer. In terms of tissue distribution, expressed in eye, liver, kidney, brain, intestine, placenta, epididymus and submaxillary gland. In eye, strongly expressed in the retinal pigment epithelium, with lower expression levels detected in the inner segment of the photoreceptor cells and in the outer plexiform layer. In kidney, strong expression detected in the distal tubules and the transitional epithelium in the renal pelvis, with weaker expression detected in the epithelium of the outer stripe of the outer zone of the medulla. In liver, detected in hepatocytes in the centrilobular area. In lung, present in club cells in the epithelium of the bronchiole, in parenchyma and in cartilage surrounding the secondary bronchi. In skin, expressed in epidermis, hair follicles and mast cells in the dermis. Expressed in heart. Not detected in heart. Not detected in lung, spleen, skeletal muscle and testis.

It localises to the endoplasmic reticulum membrane. It catalyses the reaction 11-cis-retinol + NAD(+) = 11-cis-retinal + NADH + H(+). It carries out the reaction 9-cis-retinol + NAD(+) = 9-cis-retinal + NADH + H(+). The catalysed reaction is 13-cis-retinol + NAD(+) = 13-cis-retinal + NADH + H(+). The enzyme catalyses androsterone + NAD(+) = 5alpha-androstan-3,17-dione + NADH + H(+). It catalyses the reaction 5alpha-androstane-3alpha,17beta-diol + NAD(+) = 17beta-hydroxy-5alpha-androstan-3-one + NADH + H(+). Its pathway is cofactor metabolism; retinol metabolism. Inhibited by 9-cis-, 13-cis- and all-trans-retinoic acids, with the most potent inhibitor being 13-cis-retinoic acid. Weakly inhibited by oleic acid. Functionally, catalyzes the oxidation of cis-isomers of retinol, including 11-cis-, 9-cis-, and 13-cis-retinol in an NAD-dependent manner. Has no activity towards all-trans retinal. Plays a significant role in 11-cis retinol oxidation in the retinal pigment epithelium cells (RPE). Also recognizes steroids (androsterone, androstanediol) as its substrates. This chain is Retinol dehydrogenase 5, found in Mus musculus (Mouse).